The sequence spans 370 residues: Protein Wnt-1 (370 aa).

Residues Met-1 to Ser-19 form the signal peptide. A glycan (N-linked (GlcNAc...) asparagine) is linked at Asn-28. 5 disulfide bridges follow: Cys-92/Cys-103, Cys-142/Cys-150, Cys-152/Cys-169, Cys-217/Cys-231, and Cys-219/Cys-226. Residue Ser-223 is the site of O-palmitoleoyl serine; by PORCN attachment. A disordered region spans residues Gly-261–Lys-282. Basic and acidic residues predominate over residues His-267–Ala-280. 6 disulfides stabilise this stretch: Cys-299–Cys-330, Cys-315–Cys-325, Cys-329–Cys-369, Cys-345–Cys-360, Cys-347–Cys-357, and Cys-352–Cys-353. Asn-316 carries an N-linked (GlcNAc...) asparagine glycan. Residue Asn-359 is glycosylated (N-linked (GlcNAc...) asparagine).

Belongs to the Wnt family. Post-translationally, palmitoleoylation is required for efficient binding to frizzled receptors. Palmitoleoylation is necessary for proper trafficking to cell surface. Depalmitoleoylated by NOTUM, leading to inhibit Wnt signaling pathway.

Its subcellular location is the secreted. It is found in the extracellular space. It localises to the extracellular matrix. Functionally, ligand for members of the frizzled family of seven transmembrane receptors. Acts in the canonical Wnt signaling pathway by promoting beta-catenin-dependent transcriptional activation. Involved in neurogenesis. Performs a partially redundant function with wnt10b in the formation of the midbrain-hindbrain boundary (MHB) organizer. In the hindbrain, mediates lateral inhibition of boundary cell specification, probably via up-regulation of proneural and Delta gene expression in non-boundary cells; localized expression of wnt1 in boundary cells is maintained via rfng-mediated modulation of Notch activity. This is Protein Wnt-1 (wnt1) from Danio rerio (Zebrafish).